The sequence spans 366 residues: Chorismate synthase (366 aa).

Residues Arg48 and Arg54 each contribute to the NADP(+) site. FMN contacts are provided by residues 132 to 134 (RSS), 244 to 245 (NA), Gly289, 304 to 308 (KPTSS), and Arg330.

This sequence belongs to the chorismate synthase family. As to quaternary structure, homotetramer. FMNH2 serves as cofactor.

It catalyses the reaction 5-O-(1-carboxyvinyl)-3-phosphoshikimate = chorismate + phosphate. The protein operates within metabolic intermediate biosynthesis; chorismate biosynthesis; chorismate from D-erythrose 4-phosphate and phosphoenolpyruvate: step 7/7. Functionally, catalyzes the anti-1,4-elimination of the C-3 phosphate and the C-6 proR hydrogen from 5-enolpyruvylshikimate-3-phosphate (EPSP) to yield chorismate, which is the branch point compound that serves as the starting substrate for the three terminal pathways of aromatic amino acid biosynthesis. This reaction introduces a second double bond into the aromatic ring system. The sequence is that of Chorismate synthase from Methylorubrum populi (strain ATCC BAA-705 / NCIMB 13946 / BJ001) (Methylobacterium populi).